Consider the following 902-residue polypeptide: MVSLGGIARKLFGSANERRVRSYKSKIAAINALEEATKALSDEALAAKTAEFRQQLADGKTLDDLLIPAFAVAREASRRVLHMRPFDVQLTGAMILHGGAIAEMKTGEGKTLVATLAVYLNALAGKGVHVVTVNDYLAKRDAATMSKLYGFLGLTTGVIVHGLDDDQRREAYACDITYATNNELGFDYLRDNMKYDRAQMVQRGHNYAIVDEVDSILVDEARTPLIISGPLDDRSDLYNTIDAFIPLLSPEDYEIDEKQRSANFSEDGTEKLENLLRQAGLLKGESLYDIENVAIVHHINNALKAHKLFTRDKDYIVRNDEIVIIDEFTGRMMPGRRYSEGQHQALEAKEKVQIQPENQTLSSVTFQNYFRMYEKLAGMTGTASTEAEEFGNIYGLDVIEVPTNLPIQRIDEDDEVYRTGEEKFLAIITEIKAAHERGQPVLVGTTSIEKSELLAHMLRQSGFTDFQVLNARYHEQEAYIVSQAGVPGAVTIATNMAGRGTDIQLGGNVDMRLERELEGMEPGPELDAKEAAIRAEIKVLKEKALAAGGLYVIATERHESRRIDNQLRGRSGRQGDPGRSKFYLSLQDDLMRIFGSERMDSMLQKLGLKDGEAIVHPWINKALERAQKKVEARNFETRKNLLKYDDVLNDQRKVIFDQRLELMEADNIGETAADMRHEVIEALVTKHIPENAYAEQWDIAGLKAGIAQFLNLDLPVEEWAKEEGIAEDDILQRVTEAADTYAAERAERFGPEIMTYVERSVILQTIDHLWREHIVNLDHLRSVVGFRGYAQRDPLQEYKAEAFELFQSLLTNLREAVTAQLMRVELVQQEPQQPELPEMTAHHLDPVTGEDEMAQGVPAAFVPAEERDPNNPATWGRIGRNEMCPCGSGKKYKHCHGVYEQA.

ATP is bound by residues Q89, 107-111 (GEGKT), and D502. The Zn(2+) site is built by C884, C886, C895, and H896.

It belongs to the SecA family. As to quaternary structure, monomer and homodimer. Part of the essential Sec protein translocation apparatus which comprises SecA, SecYEG and auxiliary proteins SecDF-YajC and YidC. Zn(2+) serves as cofactor.

Its subcellular location is the cell inner membrane. The protein localises to the cytoplasm. The catalysed reaction is ATP + H2O + cellular proteinSide 1 = ADP + phosphate + cellular proteinSide 2.. Its function is as follows. Part of the Sec protein translocase complex. Interacts with the SecYEG preprotein conducting channel. Has a central role in coupling the hydrolysis of ATP to the transfer of proteins into and across the cell membrane, serving both as a receptor for the preprotein-SecB complex and as an ATP-driven molecular motor driving the stepwise translocation of polypeptide chains across the membrane. The protein is Protein translocase subunit SecA of Agrobacterium fabrum (strain C58 / ATCC 33970) (Agrobacterium tumefaciens (strain C58)).